The sequence spans 204 residues: Guanylate kinase (204 aa).

The region spanning 3–181 (GTLYIVSASS…AVSEMSAIFT (179 aa)) is the Guanylate kinase-like domain. 10 to 17 (ASSGTGKS) serves as a coordination point for ATP.

This sequence belongs to the guanylate kinase family.

The protein resides in the cytoplasm. It catalyses the reaction GMP + ATP = GDP + ADP. Essential for recycling GMP and indirectly, cGMP. The sequence is that of Guanylate kinase from Xylella fastidiosa (strain Temecula1 / ATCC 700964).